The chain runs to 1163 residues: MEDIDQSSLVSSSTDSPPRPPPAFKYQFVTEPEDEEDEEEEEDEEEDDEDLEELEVLERKPAAGLSAAAVPPAAAAPLLDFSSDSVPPAPRGPLPAAPPAAPERQPSWERSPAAPAPSLPPAAAVLPSKLPEDDEPPARPPPPPPAGASPLAEPAAPPSTPAAPKRRGSGSVDETLFALPAASEPVIPSSAEKIMDLMEQPGNTVSSGQEDFPSVLLETAASLPSLSPLSTVSFKEHGYLGNLSAVSSSEGTIEETLNEASKELPERATNPFVNRDLAEFSELEYSEMGSSFKGSPKGESAILVENTKEEVIVRSKDKEDLVCSAALHSPQESPVGKEDRVVSPEKTMDIFNEMQMSVVAPVREEYADFKPFEQAWEVKDTYEGSRDVLAARANVESKVDRKCLEDSLEQKSLGKDSEGRNEDASFPSTPEPVKDSSRAYITCASFTSATESTTANTFPLLEDHTSENKTDEKKIEERKAQIITEKTSPKTSNPFLVAVQDSEADYVTTDTLSKVTEAAVSNMPEGLTPDLVQEACESELNEATGTKIAYETKVDLVQTSEAIQESLYPTAQLCPSFEEAEATPSPVLPDIVMEAPLNSLLPSAGASVVQPSVSPLEAPPPVSYDSIKLEPENPPPYEEAMNVALKALGTKEGIKEPESFNAAVQETEAPYISIACDLIKETKLSTEPSPDFSNYSEIAKFEKSVPEHAELVEDSSPESEPVDLFSDDSIPEVPQTQEEAVMLMKESLTEVSETVAQHKEERLSASPQELGKPYLESFQPNLHSTKDAASNDIPTLTKKEKISLQMEEFNTAIYSNDDLLSSKEDKIKESETFSDSSPIEIIDEFPTFVSAKDDSPKLAKEYTDLEVSDKSEIANIQSGADSLPCLELPCDLSFKNIYPKDEVHVSDEFSENRSSVSKASISPSNVSALEPQTEMGSIVKSKSLTKEAEKKLPSDTEKEDRSLSAVLSAELSKTSVVDLLYWRDIKKTGVVFGASLFLLLSLTVFSIVSVTAYIALALLSVTISFRIYKGVIQAIQKSDEGHPFRAYLESEVAISEELVQKYSNSALGHVNSTIKELRRLFLVDDLVDSLKFAVLMWVFTYVGALFNGLTLLILALISLFSIPVIYERHQVQIDHYLGLANKSVKDAMAKIQAKIPGLKRKAD.

The residue at position 1 (methionine 1) is an N-acetylmethionine. 2 disordered regions span residues methionine 1–glutamate 184 and serine 244–asparagine 270. The Cytoplasmic portion of the chain corresponds to methionine 1–glycine 989. A phosphoserine mark is found at serine 7 and serine 16. Residues serine 7–serine 16 are compositionally biased toward low complexity. Acidic residues predominate over residues glutamate 31 to glutamate 55. Residues alanine 62–leucine 79 show a composition bias toward low complexity. The segment covering proline 87–alanine 101 has biased composition (pro residues). Serine 107 carries the post-translational modification Phosphoserine. Pro residues predominate over residues alanine 138 to glycine 147. A phosphoserine mark is found at serine 149, serine 169, and serine 171. Phosphoserine occurs at positions 329, 333, and 343. Position 347 is a phosphothreonine (threonine 347). The segment covering aspartate 406 to aspartate 423 has biased composition (basic and acidic residues). 2 disordered regions span residues aspartate 406 to serine 437 and threonine 454 to lysine 474. Serine 425 is modified (phosphoserine). A Phosphothreonine modification is found at threonine 429. The span at leucine 461 to lysine 474 shows a compositional bias: basic and acidic residues. A phosphoserine mark is found at serine 488, serine 689, serine 726, serine 766, and serine 830. A Phosphothreonine modification is found at threonine 832. 3 positions are modified to phosphoserine: serine 855, serine 922, and serine 962. In terms of domain architecture, Reticulon spans valine 976–aspartate 1163. A helical membrane pass occupies residues valine 990–valine 1010. Topologically, residues threonine 1011 to alanine 1104 are lumenal. Position 1075 is an N6-acetyllysine (lysine 1075). The helical transmembrane segment at leucine 1105–isoleucine 1125 threads the bilayer. The Cytoplasmic portion of the chain corresponds to tyrosine 1126 to aspartate 1163.

Binds to RTN4R. Interacts with ATL1. Interacts with TMEM170A. Interacts with RTN4IP1. As to quaternary structure, interacts in trans with CNTNAP1. Interacts with REEP5. Interacts with synaptic plasticity regulator PANTS; the interaction results in enhanced RTN4-mediated inhibition of AMPA receptor clustering. Interacts with GPR50. In terms of assembly, homodimer. Interacts with BAD/Bcl-xl and BCL2. Interact with RTN3. Interacts with NGBR. Interacts with SPTLC1. Interacts with GRAMD4. Interacts with CDH5. Interacts with BACE1 and BACE2. Interacts with REEP5. Interacts with RETREG3. Interacts with BACE1 and BACE2. Interacts with TMEM33. Isoforms A, B and C are present in optic nerve, spinal cord and cerebral cortex. Isoforms A and B are present in dorsal root ganglion, sciatic nerve and PC12 cells after longer exposure. Isoforms B and C are detected in kidney, cartilage, skin, lung and spleen. Isoform C is expressed at high level in skeletal muscle. In adult animals isoform A is expressed mainly in the nervous system.

Its subcellular location is the endoplasmic reticulum membrane. It is found in the cell membrane. The protein localises to the synapse. It localises to the cell junction. Functionally, required to induce the formation and stabilization of endoplasmic reticulum (ER) tubules. They regulate membrane morphogenesis in the ER by promoting tubular ER production. They influence nuclear envelope expansion, nuclear pore complex formation and proper localization of inner nuclear membrane proteins. However each isoform have specific functions mainly depending on their tissue expression specificities. Developmental neurite growth regulatory factor with a role as a negative regulator of axon-axon adhesion and growth, and as a facilitator of neurite branching. Regulates neurite fasciculation, branching and extension in the developing nervous system. Involved in down-regulation of growth, stabilization of wiring and restriction of plasticity in the adult CNS. Regulates the radial migration of cortical neurons via an RTN4R-LINGO1 containing receptor complex. Acts as a negative regulator of central nervous system angiogenesis. Inhibits spreading, migration and sprouting of primary brain microvascular endothelial cells (MVECs). Also induces the retraction of MVECs lamellipodia and filopodia in a ROCK pathway-dependent manner. Its function is as follows. Mainly function in endothelial cells and vascular smooth muscle cells, is also involved in immune system regulation. Modulator of vascular remodeling, promotes the migration of endothelial cells but inhibits the migration of vascular smooth muscle cells. Regulates endothelial sphingolipid biosynthesis with direct effects on vascular function and blood pressure. Inhibits serine palmitoyltransferase, SPTLC1, the rate-limiting enzyme of the novo sphingolipid biosynthetic pathway, thereby controlling production of endothelial sphingosine-1-phosphate (S1P). Required to promote macrophage homing and functions such as cytokine/chemokine gene expression involved in angiogenesis, arteriogenesis and tissue repair. Mediates ICAM1 induced transendothelial migration of leukocytes such as monocytes and neutrophils and acute inflammation. Necessary for immune responses triggered by nucleic acid sensing TLRs, such as TLR9, is required for proper TLR9 location to endolysosomes. Also involved in immune response to LPS. Plays a role in liver regeneration through the modulation of hepatocytes proliferation. Reduces the anti-apoptotic activity of Bcl-xl and Bcl-2. This is likely consecutive to their change in subcellular location, from the mitochondria to the endoplasmic reticulum, after binding and sequestration. With isoform C, inhibits BACE1 activity and amyloid precursor protein processing. In terms of biological role, regulates cardiomyocyte apoptosis upon hypoxic conditions. With isoform B, inhibits BACE1 activity and amyloid precursor protein processing. The chain is Reticulon-4 (Rtn4) from Rattus norvegicus (Rat).